Here is a 101-residue protein sequence, read N- to C-terminus: Large ribosomal subunit protein uL23 (101 aa).

Belongs to the universal ribosomal protein uL23 family. Part of the 50S ribosomal subunit. Contacts protein L29, and trigger factor when it is bound to the ribosome.

Functionally, one of the early assembly proteins it binds 23S rRNA. One of the proteins that surrounds the polypeptide exit tunnel on the outside of the ribosome. Forms the main docking site for trigger factor binding to the ribosome. The protein is Large ribosomal subunit protein uL23 of Tolumonas auensis (strain DSM 9187 / NBRC 110442 / TA 4).